The sequence spans 71 residues: uncharacterized protein (71 aa).

Residues 5 to 59 (IKEFRAKFNMTQEELAKRVGVRRETIVFLEKGKYNPSLKLAYKIARVFNAKIEDI) enclose the HTH cro/C1-type domain. A DNA-binding region (H-T-H motif) is located at residues 16–35 (QEELAKRVGVRRETIVFLEK).

This is an uncharacterized protein from Archaeoglobus fulgidus (strain ATCC 49558 / DSM 4304 / JCM 9628 / NBRC 100126 / VC-16).